We begin with the raw amino-acid sequence, 53 residues long: Large ribosomal subunit protein bL32c (53 aa).

It belongs to the bacterial ribosomal protein bL32 family.

The protein localises to the plastid. It is found in the chloroplast. The sequence is that of Large ribosomal subunit protein bL32c from Glycine max (Soybean).